Reading from the N-terminus, the 98-residue chain is NADH-ubiquinone oxidoreductase chain 4L (98 aa).

The next 3 helical transmembrane spans lie at Met-1 to Val-21, Leu-26 to Leu-46, and Ile-61 to Ile-81.

It belongs to the complex I subunit 4L family. As to quaternary structure, core subunit of respiratory chain NADH dehydrogenase (Complex I) which is composed of 45 different subunits.

The protein resides in the mitochondrion inner membrane. The catalysed reaction is a ubiquinone + NADH + 5 H(+)(in) = a ubiquinol + NAD(+) + 4 H(+)(out). Its function is as follows. Core subunit of the mitochondrial membrane respiratory chain NADH dehydrogenase (Complex I) which catalyzes electron transfer from NADH through the respiratory chain, using ubiquinone as an electron acceptor. Part of the enzyme membrane arm which is embedded in the lipid bilayer and involved in proton translocation. The protein is NADH-ubiquinone oxidoreductase chain 4L (MT-ND4L) of Chlorocebus sabaeus (Green monkey).